Here is a 206-residue protein sequence, read N- to C-terminus: ATP-dependent Clp protease proteolytic subunit 1 (206 aa).

Ser-106 functions as the Nucleophile in the catalytic mechanism. His-131 is an active-site residue.

It belongs to the peptidase S14 family. In terms of assembly, fourteen ClpP subunits assemble into 2 heptameric rings which stack back to back to give a disk-like structure with a central cavity, resembling the structure of eukaryotic proteasomes.

The protein localises to the cytoplasm. The catalysed reaction is Hydrolysis of proteins to small peptides in the presence of ATP and magnesium. alpha-casein is the usual test substrate. In the absence of ATP, only oligopeptides shorter than five residues are hydrolyzed (such as succinyl-Leu-Tyr-|-NHMec, and Leu-Tyr-Leu-|-Tyr-Trp, in which cleavage of the -Tyr-|-Leu- and -Tyr-|-Trp bonds also occurs).. In terms of biological role, cleaves peptides in various proteins in a process that requires ATP hydrolysis. Has a chymotrypsin-like activity. Plays a major role in the degradation of misfolded proteins. The polypeptide is ATP-dependent Clp protease proteolytic subunit 1 (Methylococcus capsulatus (strain ATCC 33009 / NCIMB 11132 / Bath)).